Reading from the N-terminus, the 185-residue chain is Threonylcarbamoyl-AMP synthase (185 aa).

In terms of domain architecture, YrdC-like spans 3-185 (EQAPAEVKQV…IDAISGKILR (183 aa)).

Belongs to the SUA5 family. TsaC subfamily.

It localises to the cytoplasm. The enzyme catalyses L-threonine + hydrogencarbonate + ATP = L-threonylcarbamoyladenylate + diphosphate + H2O. Required for the formation of a threonylcarbamoyl group on adenosine at position 37 (t(6)A37) in tRNAs that read codons beginning with adenine. Catalyzes the conversion of L-threonine, HCO(3)(-)/CO(2) and ATP to give threonylcarbamoyl-AMP (TC-AMP) as the acyladenylate intermediate, with the release of diphosphate. The sequence is that of Threonylcarbamoyl-AMP synthase from Shewanella woodyi (strain ATCC 51908 / MS32).